The chain runs to 119 residues: Ribonuclease P protein component (119 aa).

This sequence belongs to the RnpA family. As to quaternary structure, consists of a catalytic RNA component (M1 or rnpB) and a protein subunit.

The catalysed reaction is Endonucleolytic cleavage of RNA, removing 5'-extranucleotides from tRNA precursor.. Its function is as follows. RNaseP catalyzes the removal of the 5'-leader sequence from pre-tRNA to produce the mature 5'-terminus. It can also cleave other RNA substrates such as 4.5S RNA. The protein component plays an auxiliary but essential role in vivo by binding to the 5'-leader sequence and broadening the substrate specificity of the ribozyme. The chain is Ribonuclease P protein component from Escherichia fergusonii (strain ATCC 35469 / DSM 13698 / CCUG 18766 / IAM 14443 / JCM 21226 / LMG 7866 / NBRC 102419 / NCTC 12128 / CDC 0568-73).